The primary structure comprises 337 residues: Vacuolar protein sorting-associated protein 26B (337 aa).

Residues 311–337 form a disordered region; sequence SQRFEGTSHPETRPQHSGAAAVEQEQE.

The protein belongs to the VPS26 family. Component of the heterotrimeric retromer cargo-selective complex (CSC) which is believed to associate with variable sorting nexins to form functionally distinct retromer complex variants.

Its subcellular location is the cytoplasm. It localises to the membrane. It is found in the endosome. Acts as a component of the retromer cargo-selective complex (CSC). The CSC is believed to be the core functional component of retromer or respective retromer complex variants acting to prevent missorting of selected transmembrane cargo proteins into the lysosomal degradation pathway. Retromer mediates retrograde transport of cargo proteins from endosomes to the trans-Golgi network (TGN). The chain is Vacuolar protein sorting-associated protein 26B (vps26b) from Xenopus tropicalis (Western clawed frog).